A 439-amino-acid chain; its full sequence is MSIISDIYAREVLDSRGNPTVEVELYTEAGAMGRGIVPSGASTGEHEAVELRDGDKSRFMGKGVTKAVDNVNNIIAKEIIGYDVTDQRAIDQAMIDLDGTPNKGKLGANAILGVSLAAARAAADELGQPLYNYLGGFNGHVLPTPMMNVINGGKHANNKVDFQEFMIMPVGAKSVTEAIRMGSETFHNLKNLLNEKGYSTAVGDEGGFAPDLKNNEEPFEILVEAIKNAGYVPGKDVAIAFDCASSEFYNADTKKYELVGDGKEYTAEEFVSLLESIVDKYPVVSIEDPLDENEWEDWQMATERLGKKVQLVGDDLFVTNTDYLAKGIKMGVGNSILIKLNQIGTLTETVEAVEMAKQAGYTAVISHRSGETEDTTIADLVVALNAGQIKTGSMSRGERIAKYNQLMRIEDQLGKTSEYKGIHSFYNLDEDARMAIVNK.

Gln-163 serves as a coordination point for (2R)-2-phosphoglycerate. The active-site Proton donor is the Glu-205. Mg(2+) contacts are provided by Asp-242, Glu-287, and Asp-314. Residues Lys-339, Arg-368, Ser-369, and Lys-390 each coordinate (2R)-2-phosphoglycerate. Lys-339 functions as the Proton acceptor in the catalytic mechanism.

It belongs to the enolase family. Requires Mg(2+) as cofactor.

Its subcellular location is the cytoplasm. It is found in the secreted. The protein localises to the cell surface. It carries out the reaction (2R)-2-phosphoglycerate = phosphoenolpyruvate + H2O. It participates in carbohydrate degradation; glycolysis; pyruvate from D-glyceraldehyde 3-phosphate: step 4/5. Catalyzes the reversible conversion of 2-phosphoglycerate (2-PG) into phosphoenolpyruvate (PEP). It is essential for the degradation of carbohydrates via glycolysis. The sequence is that of Enolase from Levilactobacillus brevis (strain ATCC 367 / BCRC 12310 / CIP 105137 / JCM 1170 / LMG 11437 / NCIMB 947 / NCTC 947) (Lactobacillus brevis).